A 520-amino-acid polypeptide reads, in one-letter code: D-aminopeptidase (520 aa).

Ser62 functions as the Nucleophile in the catalytic mechanism. Catalysis depends on Lys65, which acts as the Proton donor/acceptor. An important for specificity region spans residues 477 to 487 (QRSMDAPSPGE). Asp481 serves as a coordination point for substrate.

It belongs to the peptidase S12 family. Homodimer.

The catalysed reaction is Release of an N-terminal D-amino acid from a peptide, Xaa-|-Yaa-, in which Xaa is preferably D-Ala, D-Ser or D-Thr. D-amino acid amides and methyl esters also are hydrolyzed, as is glycine amide.. Inhibited by beta-lactam compounds such as 6-aminopenicillic acid, 7-aminocephalosporanic acid, benzylpenicillin and ampicillin. Inhibited by p-chloromercuribenzoate. Its function is as follows. Hydrolyzes N-terminal residues in D-amino acid-containing peptides. The protein is D-aminopeptidase of Brucella anthropi (strain ATCC 49188 / DSM 6882 / CCUG 24695 / JCM 21032 / LMG 3331 / NBRC 15819 / NCTC 12168 / Alc 37) (Ochrobactrum anthropi).